A 667-amino-acid chain; its full sequence is Homeobox protein 3 (667 aa).

Disordered regions lie at residues 44–108 (FFQP…NSSI), 179–232 (NNNN…TVYN), 249–268 (NNNN…VNNN), and 331–418 (STNK…YQKQ). Residues 52–63 (LPPPTNQQPQPQ) are compositionally biased toward pro residues. Positions 75–96 (CNSSFENSPQQPTSPLLISSQT) are enriched in polar residues. Over residues 97–108 (SYPSDLSSNSSI) the composition is skewed to low complexity. Residues 334–343 (KRMKISHHSH) show a composition bias toward basic residues. Low complexity predominate over residues 344–379 (SLSNNNENSLSQPYFNNNNNNNNENENVYNIVNEQN). Polar residues predominate over residues 380–390 (PTFNPNQSNTH). Positions 386-454 (QSNTHQQQEE…ENENVICSEF (69 aa)) form a coiled coil. The segment at residues 602-664 (EFKSRRILSE…NKRMRDKSNK (63 aa)) is a DNA-binding region (homeobox).

It localises to the nucleus. Functionally, putative transcription factor. This Dictyostelium discoideum (Social amoeba) protein is Homeobox protein 3 (hbx3).